We begin with the raw amino-acid sequence, 186 residues long: Adrenodoxin, mitochondrial (186 aa).

The N-terminal 58 residues, 1–58 (MAVRLLRVASAALGDTAVRWQPLVGPRAGNRGPGGSIWLGLGGRAAAARTLSLSARAW), are a transit peptide targeting the mitochondrion. At Ser61 the chain carries Phosphoserine. An N6-acetyllysine; alternate modification is found at Lys64. Lys64 carries the N6-succinyllysine; alternate modification. Residues 65–169 (ITVHFINRDG…NMTVRVPEAV (105 aa)) enclose the 2Fe-2S ferredoxin-type domain. The [2Fe-2S] cluster site is built by Cys104, Cys110, Cys113, and Cys150. Lys156 carries the post-translational modification N6-succinyllysine. Ser175 carries the phosphoserine modification.

The protein belongs to the adrenodoxin/putidaredoxin family. As to quaternary structure, interacts with CYP11A1. It depends on [2Fe-2S] cluster as a cofactor.

Its subcellular location is the mitochondrion matrix. In terms of biological role, essential for the synthesis of various steroid hormones. Participates in the reduction of mitochondrial cytochrome P450 for steroidogenesis. Transfers electrons from adrenodoxin reductase to CYP11A1, a cytochrome P450 that catalyzes cholesterol side-chain cleavage. Does not form a ternary complex with adrenodoxin reductase and CYP11A1 but shuttles between the two enzymes to transfer electrons. The polypeptide is Adrenodoxin, mitochondrial (FDX1) (Sus scrofa (Pig)).